The following is a 350-amino-acid chain: Beta-ketoacyl-[acyl-carrier-protein] synthase III (350 aa).

Active-site residues include Cys120 and His256. The segment at 257–261 (QANVR) is ACP-binding. The active site involves Asn286.

It belongs to the thiolase-like superfamily. FabH family. In terms of assembly, homodimer.

It localises to the cytoplasm. The enzyme catalyses malonyl-[ACP] + acetyl-CoA + H(+) = 3-oxobutanoyl-[ACP] + CO2 + CoA. It functions in the pathway lipid metabolism; fatty acid biosynthesis. Catalyzes the condensation reaction of fatty acid synthesis by the addition to an acyl acceptor of two carbons from malonyl-ACP. Catalyzes the first condensation reaction which initiates fatty acid synthesis and may therefore play a role in governing the total rate of fatty acid production. Possesses both acetoacetyl-ACP synthase and acetyl transacylase activities. Its substrate specificity determines the biosynthesis of branched-chain and/or straight-chain of fatty acids. In Deinococcus deserti (strain DSM 17065 / CIP 109153 / LMG 22923 / VCD115), this protein is Beta-ketoacyl-[acyl-carrier-protein] synthase III.